A 282-amino-acid polypeptide reads, in one-letter code: Bis(5'-nucleosyl)-tetraphosphatase, symmetrical (282 aa).

The protein belongs to the Ap4A hydrolase family.

It catalyses the reaction P(1),P(4)-bis(5'-adenosyl) tetraphosphate + H2O = 2 ADP + 2 H(+). Functionally, hydrolyzes diadenosine 5',5'''-P1,P4-tetraphosphate to yield ADP. The chain is Bis(5'-nucleosyl)-tetraphosphatase, symmetrical from Salmonella paratyphi C (strain RKS4594).